Here is a 583-residue protein sequence, read N- to C-terminus: Putative ABC transporter ATP-binding protein exp8 (583 aa).

Positions 25-308 constitute an ABC transmembrane type-1 domain; the sequence is TFLALSFLLA…VTQNFSTLQT (284 aa). The next 5 membrane-spanning stretches (helical) occupy residues 26 to 46, 61 to 81, 135 to 155, 159 to 179, and 259 to 279; these read FLAL…PLVA, AVTV…VQYV, MFSG…TTLY, VLDF…FLLV, and LGYA…GITV. Residues 341 to 574 form the ABC transporter domain; it reads IRFEHVCFSY…GGTYHKMYSL (234 aa). 374 to 381 is a binding site for ATP; it reads GHTGSGKS.

The protein belongs to the ABC transporter superfamily.

It localises to the cell membrane. The sequence is that of Putative ABC transporter ATP-binding protein exp8 (exp8) from Streptococcus pneumoniae serotype 4 (strain ATCC BAA-334 / TIGR4).